Consider the following 177-residue polypeptide: 3-hydroxydecanoyl-[acyl-carrier-protein] dehydratase (177 aa).

The active site involves H76.

It belongs to the thioester dehydratase family. FabA subfamily. As to quaternary structure, homodimer.

It localises to the cytoplasm. The enzyme catalyses a (3R)-hydroxyacyl-[ACP] = a (2E)-enoyl-[ACP] + H2O. The catalysed reaction is (3R)-hydroxydecanoyl-[ACP] = (2E)-decenoyl-[ACP] + H2O. It carries out the reaction (2E)-decenoyl-[ACP] = (3Z)-decenoyl-[ACP]. The protein operates within lipid metabolism; fatty acid biosynthesis. Its function is as follows. Necessary for the introduction of cis unsaturation into fatty acids. Catalyzes the dehydration of (3R)-3-hydroxydecanoyl-ACP to E-(2)-decenoyl-ACP and then its isomerization to Z-(3)-decenoyl-ACP. Can catalyze the dehydratase reaction for beta-hydroxyacyl-ACPs with saturated chain lengths up to 16:0, being most active on intermediate chain length. The protein is 3-hydroxydecanoyl-[acyl-carrier-protein] dehydratase of Mannheimia succiniciproducens (strain KCTC 0769BP / MBEL55E).